Here is a 571-residue protein sequence, read N- to C-terminus: MDEIDNIILHSLRQIGCTLDDEVTSLDEFSPTLLVQVVSKCITLIDSSLDLPRTLPPGMAQRFTATASLAEACRTIGYRRDIGYQTFLYSNVAEVRRVLMFLIERLPKESADKAAGTGQPLDVTTELESRICASLQSQLQAPWMPEFCRTAAGPSSSQIAFRRFVPRKLNIPFVTQGDIAAEVKEFWSRQASLDTLDEDSFIPSVIAANDGALKASGGAIDEVDRIKVCSPVDRLQRFYTSSEQKSSVVPVGKVAVEEKLDALAIVEAARPGKTPLESLQEEIDQIRVEIERAVGEGTGLEGERMEVVELCEVQRAAVGKLKDEKKIKERTHILLEDPEVNVRKLQGIIGAGGERMKKLQDQWDVHRIPLEQELEGYRVKHSDKLSQSQQIVDQIEATRHKSEEVMMDLQTKSAMHARLQKELEKLNRTVSRTAYTSRILEIVGNIRKQKTDIDKILQDTRTLQKEINTITGQLDRQFTVTDDLIFRNAKKDEHAKKAYKLLVTLHSDCAELMALVQETGAVKREIRDLEDQIETERSRNTAANLAQICRDLAEMQSESQRLEESLRAHLR.

Coiled coils occupy residues 406-434 (MMDL…SRTA) and 509-571 (CAEL…AHLR).

This sequence belongs to the CCDC22 family.

This Culex quinquefasciatus (Southern house mosquito) protein is Coiled-coil domain-containing protein 22 homolog.